The following is a 196-amino-acid chain: Putative NADH dehydrogenase/NAD(P)H nitroreductase SCO5049 (196 aa).

This sequence belongs to the nitroreductase family. HadB/RutE subfamily. The cofactor is FMN.

In Streptomyces coelicolor (strain ATCC BAA-471 / A3(2) / M145), this protein is Putative NADH dehydrogenase/NAD(P)H nitroreductase SCO5049.